The sequence spans 165 residues: 2-C-methyl-D-erythritol 2,4-cyclodiphosphate synthase (165 aa).

2 residues coordinate a divalent metal cation: Asp-12 and His-14. 4-CDP-2-C-methyl-D-erythritol 2-phosphate contacts are provided by residues 12–14 (DVH) and 38–39 (HS). His-46 serves as a coordination point for a divalent metal cation. 4-CDP-2-C-methyl-D-erythritol 2-phosphate-binding positions include 60–62 (DIG), 65–69 (FPDTD), Phe-143, and Arg-146.

This sequence belongs to the IspF family. Homotrimer. A divalent metal cation serves as cofactor.

The catalysed reaction is 4-CDP-2-C-methyl-D-erythritol 2-phosphate = 2-C-methyl-D-erythritol 2,4-cyclic diphosphate + CMP. It participates in isoprenoid biosynthesis; isopentenyl diphosphate biosynthesis via DXP pathway; isopentenyl diphosphate from 1-deoxy-D-xylulose 5-phosphate: step 4/6. Functionally, involved in the biosynthesis of isopentenyl diphosphate (IPP) and dimethylallyl diphosphate (DMAPP), two major building blocks of isoprenoid compounds. Catalyzes the conversion of 4-diphosphocytidyl-2-C-methyl-D-erythritol 2-phosphate (CDP-ME2P) to 2-C-methyl-D-erythritol 2,4-cyclodiphosphate (ME-CPP) with a corresponding release of cytidine 5-monophosphate (CMP). This is 2-C-methyl-D-erythritol 2,4-cyclodiphosphate synthase from Aromatoleum aromaticum (strain DSM 19018 / LMG 30748 / EbN1) (Azoarcus sp. (strain EbN1)).